The chain runs to 657 residues: UvrABC system protein B (657 aa).

The Helicase ATP-binding domain maps to 23–414 (KSIKKGNKYQ…KENIFHQIMR (392 aa)). 36–43 (GVTGSGKT) lines the ATP pocket. The Beta-hairpin motif lies at 89–112 (YYDYYQPEAYIPRTDVFIEKDSST). In terms of domain architecture, Helicase C-terminal spans 431–593 (QVEILFDEAK…ITPTSVKRHI (163 aa)). The 36-residue stretch at 622–657 (AKLAKELRKQMLEAAKALEFEKAAAIRDEINKLRDL) folds into the UVR domain.

The protein belongs to the UvrB family. Forms a heterotetramer with UvrA during the search for lesions. Interacts with UvrC in an incision complex.

The protein localises to the cytoplasm. In terms of biological role, the UvrABC repair system catalyzes the recognition and processing of DNA lesions. A damage recognition complex composed of 2 UvrA and 2 UvrB subunits scans DNA for abnormalities. Upon binding of the UvrA(2)B(2) complex to a putative damaged site, the DNA wraps around one UvrB monomer. DNA wrap is dependent on ATP binding by UvrB and probably causes local melting of the DNA helix, facilitating insertion of UvrB beta-hairpin between the DNA strands. Then UvrB probes one DNA strand for the presence of a lesion. If a lesion is found the UvrA subunits dissociate and the UvrB-DNA preincision complex is formed. This complex is subsequently bound by UvrC and the second UvrB is released. If no lesion is found, the DNA wraps around the other UvrB subunit that will check the other stand for damage. The sequence is that of UvrABC system protein B from Campylobacter jejuni (strain RM1221).